Consider the following 648-residue polypeptide: Copper methylamine oxidase (648 aa).

The propeptide occupies 1-9; that stretch reads MTLNAESEA. 299–310 is a substrate binding site; the sequence is AFDSGEYNIGNM. The active-site Proton acceptor is D301. The cysteines at positions 320 and 346 are disulfide-linked. 382–387 provides a ligand contact to substrate; sequence VANYEY. The active-site Schiff-base intermediate with substrate; via topaquinone is Y385. Position 385 is a 2',4',5'-topaquinone (Y385). Cu cation is bound by residues H436 and H438. Residues D445, F446, and D584 each contribute to the Mn(2+) site. H595 provides a ligand contact to Cu cation. The interval 629 to 648 is disordered; sequence PTSTSTTQTGEADTCCHTDK.

It belongs to the copper/topaquinone oxidase family. Homodimer. The cofactor is Cu cation. Zn(2+) serves as cofactor. Requires L-topaquinone as cofactor. Mn(2+) is required as a cofactor. Topaquinone (TPQ) is generated by copper-dependent autoxidation of a specific tyrosyl residue.

The catalysed reaction is a primary methyl amine + O2 + H2O = an aldehyde + H2O2 + NH4(+). This chain is Copper methylamine oxidase (maoII), found in Arthrobacter sp. (strain P1).